A 382-amino-acid chain; its full sequence is Flap endonuclease 1 (382 aa).

Residues 1–104 (MGIKGLSQVI…GELEKRSERR (104 aa)) form an N-domain region. Asp34 contributes to the Mg(2+) binding site. DNA is bound by residues Arg47 and Arg70. The Mg(2+) site is built by Asp86, Glu158, Glu160, Asp179, and Asp181. Residues 122-253 (EAEKFERRLV…KKAVELIRQH (132 aa)) are I-domain. Residue Glu158 coordinates DNA. DNA is bound by residues Gly231 and Asp233. Asp233 is a Mg(2+) binding site. The tract at residues 336–344 (TQGRIDSFF) is interaction with PCNA. Positions 358–382 (KRKAEEAEKAKKGAKKGGPPKKRAK) are disordered. Residues 359 to 368 (RKAEEAEKAK) are compositionally biased toward basic and acidic residues. Basic residues predominate over residues 369 to 382 (KGAKKGGPPKKRAK).

It belongs to the XPG/RAD2 endonuclease family. FEN1 subfamily. In terms of assembly, interacts with PCNA. Three molecules of crn-1 bind to one PCNA trimer with each molecule binding to one PCNA monomer. PCNA stimulates the nuclease activity without altering cleavage specificity. Interacts with cps-6. Requires Mg(2+) as cofactor. In terms of processing, phosphorylated. Phosphorylation upon DNA damage induces relocalization to the nuclear plasma.

It localises to the nucleus. Its subcellular location is the nucleolus. It is found in the nucleoplasm. The protein resides in the mitochondrion. Functionally, structure-specific nuclease with 5'-flap endonuclease and 5'-3' exonuclease activities involved in DNA replication and repair. During DNA replication, cleaves the 5'-overhanging flap structure that is generated by displacement synthesis when DNA polymerase encounters the 5'-end of a downstream Okazaki fragment. It enters the flap from the 5'-end and then tracks to cleave the flap base, leaving a nick for ligation. Also involved in the long patch base excision repair (LP-BER) pathway, by cleaving within the apurinic/apyrimidinic (AP) site-terminated flap. Acts as a genome stabilization factor that prevents flaps from equilibrating into structures that lead to duplications and deletions. Also possesses 5'-3' exonuclease activity on nicked or gapped double-stranded DNA, and exhibits RNase H activity. Also involved in replication and repair of rDNA and in repairing mitochondrial DNA. Can associate and cooperate with cps-6 to promote stepwise DNA fragmentation, utilizing the endonuclease activity of cps-6 and both of its own 5'-3' exonuclease activity and gap-dependent endonuclease activity. May play a critical role in switching the state of cells from DNA replication/repair to DNA degradation during apoptosis. This Caenorhabditis elegans protein is Flap endonuclease 1.